We begin with the raw amino-acid sequence, 420 residues long: Protein translocase subunit SecF (420 aa).

6 helical membrane-spanning segments follow: residues 7-27 (FSLL…AGVL), 250-270 (LLVR…FLYV), 276-296 (WFFA…MVSF), 309-327 (IAAI…VVVF), 358-378 (VVTT…TEGG), and 388-408 (VGMV…IALI).

Belongs to the SecD/SecF family. SecF subfamily. In terms of assembly, forms a complex with SecD. Part of the essential Sec protein translocation apparatus which comprises SecA, SecYEG and auxiliary proteins SecDF. Other proteins may also be involved.

It localises to the cell inner membrane. Functionally, part of the Sec protein translocase complex. Interacts with the SecYEG preprotein conducting channel. SecDF uses the proton motive force (PMF) to complete protein translocation after the ATP-dependent function of SecA. The chain is Protein translocase subunit SecF from Treponema pallidum (strain Nichols).